A 328-amino-acid chain; its full sequence is 4-hydroxythreonine-4-phosphate dehydrogenase (328 aa).

Histidine 130 and threonine 131 together coordinate substrate. Histidine 163, histidine 208, and histidine 263 together coordinate a divalent metal cation. Substrate-binding residues include lysine 271, asparagine 280, and arginine 289.

This sequence belongs to the PdxA family. As to quaternary structure, homodimer. It depends on Zn(2+) as a cofactor. Mg(2+) is required as a cofactor. Requires Co(2+) as cofactor.

It is found in the cytoplasm. It carries out the reaction 4-(phosphooxy)-L-threonine + NAD(+) = 3-amino-2-oxopropyl phosphate + CO2 + NADH. The protein operates within cofactor biosynthesis; pyridoxine 5'-phosphate biosynthesis; pyridoxine 5'-phosphate from D-erythrose 4-phosphate: step 4/5. Its function is as follows. Catalyzes the NAD(P)-dependent oxidation of 4-(phosphooxy)-L-threonine (HTP) into 2-amino-3-oxo-4-(phosphooxy)butyric acid which spontaneously decarboxylates to form 3-amino-2-oxopropyl phosphate (AHAP). This chain is 4-hydroxythreonine-4-phosphate dehydrogenase, found in Burkholderia vietnamiensis (strain G4 / LMG 22486) (Burkholderia cepacia (strain R1808)).